The primary structure comprises 181 residues: Peptide deformylase 2 (181 aa).

Fe cation contacts are provided by Cys109 and His151. The active site involves Glu152. Residue His155 participates in Fe cation binding.

Belongs to the polypeptide deformylase family. It depends on Fe(2+) as a cofactor.

It carries out the reaction N-terminal N-formyl-L-methionyl-[peptide] + H2O = N-terminal L-methionyl-[peptide] + formate. In terms of biological role, removes the formyl group from the N-terminal Met of newly synthesized proteins. Requires at least a dipeptide for an efficient rate of reaction. N-terminal L-methionine is a prerequisite for activity but the enzyme has broad specificity at other positions. The chain is Peptide deformylase 2 from Shewanella oneidensis (strain ATCC 700550 / JCM 31522 / CIP 106686 / LMG 19005 / NCIMB 14063 / MR-1).